We begin with the raw amino-acid sequence, 874 residues long: Probable inorganic carbon transporter subunit DabA (874 aa).

Cys-398, Asp-400, His-580, and Cys-595 together coordinate Zn(2+).

It belongs to the inorganic carbon transporter (TC 9.A.2) DabA family. Forms a complex with DabB. Requires Zn(2+) as cofactor.

The protein resides in the cell membrane. Part of an energy-coupled inorganic carbon pump. This is Probable inorganic carbon transporter subunit DabA from Bacillus cereus (strain 03BB102).